A 357-amino-acid polypeptide reads, in one-letter code: CRISPR system Cms protein Csm5 (357 aa).

The protein belongs to the CRISPR-associated Csm5 family. As to quaternary structure, part of the Csm effector complex that includes at least Cas10(1), Csm2(3), Csm3(5), Csm4(1), Csm5(1) and mature crRNA. The Csm complex is elongated and slightly twisted with a maximal length of 215 Angstroms and a diameter of 75-80 Angstroms. It has been modeled to have a central protein filamant of Csm3 subunits along which the dsRNA helix of paired crRNA and target RNA binds. The filament is capped at one end by Cas10 and Csm4 and at the other end by Csm5; ssDNA is thought to bind to the N-terminal HD domain of Cas10. Csm with a precursor crRNA does not include Csm5, while Cas6, the enzyme probably involved in pre-crRNA processing, is found associated with a subset of the Csm complex.

Its function is as follows. CRISPR (clustered regularly interspaced short palindromic repeat) is an adaptive immune system that provides protection against mobile genetic elements (viruses, transposable elements and conjugative plasmids). CRISPR clusters contain spacers, sequences complementary to antecedent mobile elements, and target invading nucleic acids. CRISPR clusters are transcribed and processed into CRISPR RNA (crRNA). The type III-A Csm effector complex binds crRNA and acts as a crRNA-guided RNase, DNase and cyclic oligoadenylate synthase; binding of target RNA cognate to the crRNA is required for all activities. In a heterologous host this Csm effector complex restricts ssRNA phage MS2, suggesting it may target RNA viruses in vivo. In terms of biological role, csm functions as a non-specific ssDNase. Base-pairing between crRNA and target RNA to form a ternary Csm complex activates a ssDNase activity; target RNA cleavage suppresses the ssDNase, a temporal control that prevents uncontrolled DNA degradation. Viral RNA transcripts probably tether the Csm complex to the viral genome, recruiting Cas10 ssDNA activity which is able to degrade DNA in the transcription bubble, spatially controlling the DNase activity. This subunit might be involved in maturation of a crRNA intermediate to its mature form. The polypeptide is CRISPR system Cms protein Csm5 (Streptococcus thermophilus).